The primary structure comprises 130 residues: Small ribosomal subunit protein uS9 (130 aa).

This sequence belongs to the universal ribosomal protein uS9 family.

In Chromobacterium violaceum (strain ATCC 12472 / DSM 30191 / JCM 1249 / CCUG 213 / NBRC 12614 / NCIMB 9131 / NCTC 9757 / MK), this protein is Small ribosomal subunit protein uS9.